The chain runs to 131 residues: (R)-mandelonitrile lyase (131 aa).

One can recognise a Cupin type-2 domain in the interval 42-104; sequence VTFEPGARTA…WHGAAPTTAM (63 aa). Histidine 53, histidine 55, glutamine 59, histidine 94, and histidine 96 together coordinate Mn(2+).

Belongs to the cupin domain-containing hydroxynitrile lyase family. It depends on Mn(2+) as a cofactor.

The enzyme catalyses (R)-mandelonitrile = benzaldehyde + hydrogen cyanide. Hydroxynitrile lyase which catalyzes mandelonitrile formation from benzaldehyde and hydrogen cyanide with high stereoselectivity in presence of manganese. This Granulicella tundricola (strain ATCC BAA-1859 / DSM 23138 / MP5ACTX9) protein is (R)-mandelonitrile lyase.